The sequence spans 344 residues: Probable glucan endo-1,3-beta-glucosidase At4g16260 (344 aa).

An N-terminal signal peptide occupies residues 1–21 (MTTLFLLIALFITTILNPTSG). The Proton donor role is filled by Glu116. Residue Glu257 is the Nucleophile of the active site.

It belongs to the glycosyl hydrolase 17 family. In terms of assembly, (Microbial infection) Interacts with the 30C02 effector protein (AC G3GD54) of the beet cyst nematode Heterodera schachtii. Interaction with the 30C02 effector protein may potentially suppress beta-1,3-glucanase activity and plant defense.

Its subcellular location is the secreted. The enzyme catalyses Hydrolysis of (1-&gt;3)-beta-D-glucosidic linkages in (1-&gt;3)-beta-D-glucans.. In terms of biological role, may be involved in plant defense against cyst nematode pathogens. This is Probable glucan endo-1,3-beta-glucosidase At4g16260 from Arabidopsis thaliana (Mouse-ear cress).